Reading from the N-terminus, the 661-residue chain is Bifunctional xylanase/xylan deacetylase (661 aa).

Residues 1–27 form the signal peptide; sequence MKLPTLGKCVVRTLMGAVALGAISVNA. The GH11 domain occupies 29–226; that stretch reads TLSSNSTGTN…SRGSSDITVS (198 aa). Glu116 serves as the catalytic Nucleophile; for endoxylanase activity. Glu213 (proton donor; for endoxylanase activity) is an active-site residue. The segment at 220 to 259 is disordered; the sequence is SSDITVSEGTSGGGTSSVGGASSSVNSSTGGGSSGGITVR. Positions 237–247 are enriched in low complexity; that stretch reads VGGASSSVNSS. Positions 394–577 are polysaccharide deacetylase; the sequence is SNCSGYVGIT…AKGLCPGRID (184 aa). The NodB homology domain maps to 398 to 574; the sequence is GYVGITFDDG…NLRAKGLCPG (177 aa). Residues 578 to 610 are disordered; the sequence is PNTGRAVAPSSSGGSSSVALSSSSRSSSSAGGN. Low complexity predominate over residues 581-608; the sequence is GRAVAPSSSGGSSSVALSSSSRSSSSAG. A CBM10 domain is found at 616 to 645; the sequence is QCNWWGTFYPLCQTQTSGWGWENSRSCIST.

This sequence in the N-terminal section; belongs to the glycosyl hydrolase 11 (cellulase G) family.

The protein localises to the secreted. It catalyses the reaction Endohydrolysis of (1-&gt;4)-beta-D-xylosidic linkages in xylans.. The catalysed reaction is Deacetylation of xylans and xylo-oligosaccharides.. It functions in the pathway glycan degradation; xylan degradation. Its function is as follows. Endo-acting xylanase which specifically cleaves internal linkages on the xylan backbone, releasing xylooligosaccharides. Is able to hydrolyze oat spelt xylan and the arabinoxylans from wheat and rye, releasing xylobiose as the major product. Also likely catalyzes, via its C-terminal domain, the removal of acetyl groups from acetylated xylan. Thus, has the capability of hydrolyzing acetylated xylan. Does not attack mannan, galactan, arabinan or any cellulosic substrates. This Cellvibrio japonicus (Pseudomonas fluorescens subsp. cellulosa) protein is Bifunctional xylanase/xylan deacetylase (xyn11A).